The following is a 501-amino-acid chain: Putative lon protease homolog (501 aa).

Residue 53 to 60 coordinates ATP; that stretch reads GPPGIGKS. The span at 481–494 shows a compositional bias: polar residues; that stretch reads SSSQRMSQHGYSSE. The interval 481–501 is disordered; it reads SSSQRMSQHGYSSENIDRSYM.

It belongs to the peptidase S16 family.

This is Putative lon protease homolog from Methanothermobacter thermautotrophicus (strain ATCC 29096 / DSM 1053 / JCM 10044 / NBRC 100330 / Delta H) (Methanobacterium thermoautotrophicum).